Consider the following 478-residue polypeptide: Proline--tRNA ligase (478 aa).

Belongs to the class-II aminoacyl-tRNA synthetase family. ProS type 3 subfamily. Homodimer.

It is found in the cytoplasm. The catalysed reaction is tRNA(Pro) + L-proline + ATP = L-prolyl-tRNA(Pro) + AMP + diphosphate. Functionally, catalyzes the attachment of proline to tRNA(Pro) in a two-step reaction: proline is first activated by ATP to form Pro-AMP and then transferred to the acceptor end of tRNA(Pro). This is Proline--tRNA ligase from Methanoregula boonei (strain DSM 21154 / JCM 14090 / 6A8).